Reading from the N-terminus, the 207-residue chain is Ras-related protein RABH1e (207 aa).

GTP is bound at residue 16–23; the sequence is GDQSVGKT. The short motif at 38–46 is the Effector region element; sequence YQATIGIDF. GTP contacts are provided by residues 64 to 68, 122 to 125, and 152 to 153; these read DTAGQ, NKTD, and SA. S-geranylgeranyl cysteine attachment occurs at residues cysteine 205 and cysteine 207. Cysteine 207 carries the post-translational modification Cysteine methyl ester.

The protein belongs to the small GTPase superfamily. Rab family.

Its subcellular location is the golgi apparatus membrane. Functionally, protein transport. Regulator of membrane traffic from the Golgi apparatus towards the endoplasmic reticulum (ER). The protein is Ras-related protein RABH1e (RABH1E) of Arabidopsis thaliana (Mouse-ear cress).